Consider the following 341-residue polypeptide: RNA 3'-terminal phosphate cyclase (341 aa).

ATP-binding positions include glutamine 102 and 283–287; that span reads HLADQ. The active-site Tele-AMP-histidine intermediate is the histidine 308.

It belongs to the RNA 3'-terminal cyclase family. Type 1 subfamily.

Its subcellular location is the cytoplasm. The catalysed reaction is a 3'-end 3'-phospho-ribonucleotide-RNA + ATP = a 3'-end 2',3'-cyclophospho-ribonucleotide-RNA + AMP + diphosphate. Its function is as follows. Catalyzes the conversion of 3'-phosphate to a 2',3'-cyclic phosphodiester at the end of RNA. The mechanism of action of the enzyme occurs in 3 steps: (A) adenylation of the enzyme by ATP; (B) transfer of adenylate to an RNA-N3'P to produce RNA-N3'PP5'A; (C) and attack of the adjacent 2'-hydroxyl on the 3'-phosphorus in the diester linkage to produce the cyclic end product. The biological role of this enzyme is unknown but it is likely to function in some aspects of cellular RNA processing. In Ectopseudomonas mendocina (strain ymp) (Pseudomonas mendocina), this protein is RNA 3'-terminal phosphate cyclase.